The following is a 148-amino-acid chain: uncharacterized protein (148 aa).

Residues 3-64 enclose the HTH asnC-type domain; the sequence is IDDLDRKILS…KLNYEKLGYE (62 aa). The segment at residues 22–41 is a DNA-binding region (H-T-H motif); sequence YREIAKKLNVAVGTIYNRIK.

This is an uncharacterized protein from Pyrococcus furiosus (strain ATCC 43587 / DSM 3638 / JCM 8422 / Vc1).